The sequence spans 292 residues: Bifunctional protein FolD (292 aa).

Residues 165–167 (GRS), S190, and T231 contribute to the NADP(+) site.

Belongs to the tetrahydrofolate dehydrogenase/cyclohydrolase family. As to quaternary structure, homodimer.

It catalyses the reaction (6R)-5,10-methylene-5,6,7,8-tetrahydrofolate + NADP(+) = (6R)-5,10-methenyltetrahydrofolate + NADPH. The enzyme catalyses (6R)-5,10-methenyltetrahydrofolate + H2O = (6R)-10-formyltetrahydrofolate + H(+). Its pathway is one-carbon metabolism; tetrahydrofolate interconversion. In terms of biological role, catalyzes the oxidation of 5,10-methylenetetrahydrofolate to 5,10-methenyltetrahydrofolate and then the hydrolysis of 5,10-methenyltetrahydrofolate to 10-formyltetrahydrofolate. In Arthrobacter globiformis, this protein is Bifunctional protein FolD.